The following is a 116-amino-acid chain: Large ribosomal subunit protein uL18 (116 aa).

The protein belongs to the universal ribosomal protein uL18 family. As to quaternary structure, part of the 50S ribosomal subunit; part of the 5S rRNA/L5/L18/L25 subcomplex. Contacts the 5S and 23S rRNAs.

This is one of the proteins that bind and probably mediate the attachment of the 5S RNA into the large ribosomal subunit, where it forms part of the central protuberance. This is Large ribosomal subunit protein uL18 from Mycoplasma capricolum subsp. capricolum (strain California kid / ATCC 27343 / NCTC 10154).